Consider the following 288-residue polypeptide: Elongation factor Ts (288 aa).

The involved in Mg(2+) ion dislocation from EF-Tu stretch occupies residues 79-82 (TDFV).

This sequence belongs to the EF-Ts family.

The protein localises to the cytoplasm. Associates with the EF-Tu.GDP complex and induces the exchange of GDP to GTP. It remains bound to the aminoacyl-tRNA.EF-Tu.GTP complex up to the GTP hydrolysis stage on the ribosome. This is Elongation factor Ts from Ehrlichia chaffeensis (strain ATCC CRL-10679 / Arkansas).